We begin with the raw amino-acid sequence, 398 residues long: ATP-dependent RNA helicase eIF4A (398 aa).

The Q motif signature appears at 25 to 53; the sequence is DSFDSMELKPELLRGVYAYGFERPSAIQQ. The Helicase ATP-binding domain maps to 56–226; the sequence is ILPIVKGNDV…TKFMRDPVRI (171 aa). 69–76 provides a ligand contact to ATP; it reads AQSGTGKT. Positions 174–177 match the DEAD box motif; the sequence is DEAD. Positions 237 to 398 constitute a Helicase C-terminal domain; it reads GIKQFYIAVE…EMPMNVADLI (162 aa).

Belongs to the DEAD box helicase family. eIF4A subfamily. As to quaternary structure, component of the eIF4F complex, which composition varies with external and internal environmental conditions. It is composed of at least eIF4A, eIF4E and eIF4G.

The protein localises to the cytoplasm. It carries out the reaction ATP + H2O = ADP + phosphate + H(+). ATP-dependent RNA helicase which is a subunit of the eIF4F complex involved in cap recognition and is required for mRNA binding to ribosome. In the current model of translation initiation, eIF4A unwinds RNA secondary structures in the 5'-UTR of mRNAs which is necessary to allow efficient binding of the small ribosomal subunit, and subsequent scanning for the initiator codon. This is ATP-dependent RNA helicase eIF4A (tif1) from Emericella nidulans (strain FGSC A4 / ATCC 38163 / CBS 112.46 / NRRL 194 / M139) (Aspergillus nidulans).